The primary structure comprises 246 residues: NAD(P)H-hydrate epimerase (246 aa).

Positions 12–234 constitute a YjeF N-terminal domain; that stretch reads AAEIDKELMG…DFANKFGFEP (223 aa). 69 to 73 contributes to the (6S)-NADPHX binding site; sequence NNGGD. The K(+) site is built by Asn70 and Asp138. (6S)-NADPHX is bound by residues 142–148 and Asp173; that span reads GFSFKPP. Thr176 lines the K(+) pocket.

This sequence belongs to the NnrE/AIBP family. K(+) is required as a cofactor.

Its subcellular location is the cytoplasm. It localises to the mitochondrion. It carries out the reaction (6R)-NADHX = (6S)-NADHX. It catalyses the reaction (6R)-NADPHX = (6S)-NADPHX. Its function is as follows. Catalyzes the epimerization of the S- and R-forms of NAD(P)HX, a damaged form of NAD(P)H that is a result of enzymatic or heat-dependent hydration. This is a prerequisite for the S-specific NAD(P)H-hydrate dehydratase to allow the repair of both epimers of NAD(P)HX. The chain is NAD(P)H-hydrate epimerase from Saccharomyces cerevisiae (strain ATCC 204508 / S288c) (Baker's yeast).